A 316-amino-acid polypeptide reads, in one-letter code: Protoheme IX farnesyltransferase (316 aa).

9 helical membrane-spanning segments follow: residues 32-52 (VMSLVVFTAFAGLVLAPGHIN), 53-73 (PVLGLIAILCIAVGAGASGAL), 93-113 (IPAGRIAPSEALAFGLVLSGF), 116-136 (VILGLAVNWLSAAILAFTIFF), 152-172 (NIVIGGAAGAFPPMIGWACVT), 180-200 (TVLFLIIFLWTPAHFWALALF), 221-241 (VTKHQIVAYAVLTAICAVLPS), 252-271 (LVAAALGAIFVYCSIAVWRM), and 289-309 (IFYLFAVFSALMIDRLAAILV).

The protein belongs to the UbiA prenyltransferase family. Protoheme IX farnesyltransferase subfamily.

The protein localises to the cell inner membrane. It catalyses the reaction heme b + (2E,6E)-farnesyl diphosphate + H2O = Fe(II)-heme o + diphosphate. The protein operates within porphyrin-containing compound metabolism; heme O biosynthesis; heme O from protoheme: step 1/1. Converts heme B (protoheme IX) to heme O by substitution of the vinyl group on carbon 2 of heme B porphyrin ring with a hydroxyethyl farnesyl side group. This chain is Protoheme IX farnesyltransferase, found in Rhizobium etli (strain ATCC 51251 / DSM 11541 / JCM 21823 / NBRC 15573 / CFN 42).